A 182-amino-acid polypeptide reads, in one-letter code: MQYIPLKEKYEKEIRNAMMKEFGYKNIHQVPRLEKIVINMGIGEGSRNKDVIDIHAKELALIAGQKPVVTRAKKSISNFKIRKGMPIGLKVTLRGLRMYNFLYKLINLVLPKVRDFRGLNPNGFDGRGNYSFGLTEQLVFPEISPDQVRRVQGMDIVIVTTAKTDEEARKLLELFGFPFKRQ.

This sequence belongs to the universal ribosomal protein uL5 family. As to quaternary structure, part of the 50S ribosomal subunit; part of the 5S rRNA/L5/L18/L25 subcomplex. Contacts the 5S rRNA and the P site tRNA. Forms a bridge to the 30S subunit in the 70S ribosome.

Its function is as follows. This is one of the proteins that bind and probably mediate the attachment of the 5S RNA into the large ribosomal subunit, where it forms part of the central protuberance. In the 70S ribosome it contacts protein S13 of the 30S subunit (bridge B1b), connecting the 2 subunits; this bridge is implicated in subunit movement. Contacts the P site tRNA; the 5S rRNA and some of its associated proteins might help stabilize positioning of ribosome-bound tRNAs. In Thermosipho melanesiensis (strain DSM 12029 / CIP 104789 / BI429), this protein is Large ribosomal subunit protein uL5.